We begin with the raw amino-acid sequence, 465 residues long: Paired box protein Pax-8 (465 aa).

Positions 26–152 (GHGGLNQLGG…SSINRIIRTK (127 aa)) form a DNA-binding region, paired. Residues 29 to 85 (GLNQLGGAFVNGRPLPEVVRQRIVDLAHQGVRPCDISRQLRVSHGCVSKILGRYYET) are PAI subdomain. Positions 104-152 (KVVEKIGDYKRQNPTMFAWEIRDRLLTDGVCDNDTVPSVSSINRIIRTK) are RED subdomain. The tract at residues 206-227 (PSADGKRKLDDSDQESCRLSID) is disordered.

As to expression, expression starts at late gastrula stages in cells fated to become the primordia of the otic system and the pronephric kidney. Expression is maintained in these two structures through late tailbud stages. Does not appear to be expressed in the thyroid gland.

The protein resides in the nucleus. In terms of biological role, probable transcription factor. Involved in kidney development, acting synergistically with lhx1/lim-1 to establish the pronephric primordium in late gastrulae/early neurulae. This chain is Paired box protein Pax-8, found in Xenopus laevis (African clawed frog).